A 41-amino-acid polypeptide reads, in one-letter code: Large ribosomal subunit protein bL36 (41 aa).

Belongs to the bacterial ribosomal protein bL36 family.

The chain is Large ribosomal subunit protein bL36 from Rhodopseudomonas palustris (strain TIE-1).